We begin with the raw amino-acid sequence, 187 residues long: Putative adenylate kinase (187 aa).

Residues G10, G12, K13, T14, and I15 each coordinate ATP. Positions 30–53 are NMP; it reads SLSQFVIENKLYTEYDELRQSYII. Residues 103–113 are LID; that stretch reads GRGWADIKVAE. R104 is a binding site for ATP.

It belongs to the adenylate kinase family. AK6 subfamily. In terms of assembly, interacts with uS11. Not a structural component of 40S pre-ribosomes, but transiently interacts with them by binding to uS11.

It carries out the reaction AMP + ATP = 2 ADP. The catalysed reaction is ATP + H2O = ADP + phosphate + H(+). In terms of biological role, broad-specificity nucleoside monophosphate (NMP) kinase that catalyzes the reversible transfer of the terminal phosphate group between nucleoside triphosphates and monophosphates. Also has ATPase activity. Involved in the late maturation steps of the 30S ribosomal particles, specifically 16S rRNA maturation. While NMP activity is not required for ribosome maturation, ATPase activity is. Associates transiently with small ribosomal subunit protein uS11. ATP hydrolysis breaks the interaction with uS11. May temporarily remove uS11 from the ribosome to enable a conformational change of the ribosomal RNA that is needed for the final maturation step of the small ribosomal subunit. The polypeptide is Putative adenylate kinase (Saccharolobus islandicus (strain L.S.2.15 / Lassen #1) (Sulfolobus islandicus)).